Reading from the N-terminus, the 539-residue chain is Fusion glycoprotein F0 (539 aa).

An N-terminal signal peptide occupies residues 1 to 18 (MSWKVVIIFSLLITPQHG). 7 cysteine pairs are disulfide-bonded: C28/C407, C60/C182, C283/C311, C292/C301, C326/C335, C350/C361, and C384/C390. N57 carries N-linked (GlcNAc...) asparagine; by host glycosylation. The interval 103-127 (FVLGAIALGVATAAAVTAGVAIAKT) is fusion peptide. The N-linked (GlcNAc...) asparagine; by host glycan is linked to N172. The Cell attachment site signature appears at 329-331 (RGD). N353 carries an N-linked (GlcNAc...) asparagine; by host glycan. A helical membrane pass occupies residues 492–512 (IIVIILIAVLGSSMILVSIFI). A disordered region spans residues 520-539 (PTGAPPELSGVTNNGFIPHS). The span at 529 to 539 (GVTNNGFIPHS) shows a compositional bias: polar residues.

Belongs to the paramyxoviruses fusion glycoprotein family. Homotrimer. Heterodimer with fusion protein F2; disulfide-linked. As a heterodimer with F2, interacts with host heparan sulfate. As a heterodimer with F2, interacts with host integrin ITGAV/ITGB1. Part of a complex composed of F1, F2 and G glycoproteins. As to quaternary structure, homotrimer. Heterodimer with fusion protein F1; disulfide-linked. As a heterodimer with F1, interacts with host heparan sulfate. As a heterodimer with F2, interacts with host integrin ITGAV/ITGB1. Part of a complex composed of F1, F2 and G glycoproteins. In terms of processing, the F glycoprotein is synthesized as a F0 inactive precursor that is heavily N-glycosylated and processed.

It localises to the virion membrane. It is found in the host cell membrane. In terms of biological role, inactive precursor that is cleaved to give rise to the mature F1 and F2 fusion glycoproteins. Its function is as follows. Class I viral fusion protein. Under the current model, the protein has at least 3 conformational states: pre-fusion native state, pre-hairpin intermediate state, and post-fusion hairpin state. During viral and plasma cell membrane fusion, the coiled coil regions assume a trimer-of-hairpins structure, positioning the fusion peptide in close proximity to the C-terminal region of the ectodomain. The formation of this structure appears to drive apposition and subsequent fusion of viral and cellular membranes leading to delivery of the nucleocapsid into the cytoplasm. This fusion is pH independent and occurs at the plasma or endosomal membrane. The trimer of F1-F2 (F protein) also facilitates the attachment to host cell by binding to host heparan sulfate. Major determinant of the species specificity of RSV infection. The trimer of F1-F2 (F protein) also facilitates the attachment to host cell by binding to host heparan sulfate. The sequence is that of Fusion glycoprotein F0 (F) from Human metapneumovirus (strain CAN97-83) (HMPV).